The primary structure comprises 96 residues: Large ribosomal subunit protein uL23 (96 aa).

It belongs to the universal ribosomal protein uL23 family. As to quaternary structure, part of the 50S ribosomal subunit. Contacts protein L29, and trigger factor when it is bound to the ribosome.

Functionally, one of the early assembly proteins it binds 23S rRNA. One of the proteins that surrounds the polypeptide exit tunnel on the outside of the ribosome. Forms the main docking site for trigger factor binding to the ribosome. In Nitratidesulfovibrio vulgaris (strain ATCC 29579 / DSM 644 / CCUG 34227 / NCIMB 8303 / VKM B-1760 / Hildenborough) (Desulfovibrio vulgaris), this protein is Large ribosomal subunit protein uL23.